A 263-amino-acid polypeptide reads, in one-letter code: Small ribosomal subunit protein eS4 (263 aa).

Residues 42 to 104 (LPLIVFLRNR…TGEHFRLVYD (63 aa)) enclose the S4 RNA-binding domain.

Belongs to the eukaryotic ribosomal protein eS4 family.

The polypeptide is Small ribosomal subunit protein eS4 (RPS4Y1) (Pan paniscus (Pygmy chimpanzee)).